Here is a 387-residue protein sequence, read N- to C-terminus: Proline-rich protein 5 (387 aa).

Interaction with RICTOR stretches follow at residues 10 to 96 (MSSP…LTKG) and 189 to 219 (HESRGVTEDYLRLETLIQKVVSPYLGTYGLY). A disordered region spans residues 11 to 33 (SSPSLSDLGKREPGAAGADERGT). Positions 18 to 33 (LGKREPGAAGADERGT) are enriched in basic and acidic residues. Residue S253 is modified to Phosphoserine. Disordered regions lie at residues 262-347 (NPVA…PETL) and 365-387 (DFGRGSRSSVSDFEAAGGRPSVV). Over residues 310–321 (SSPSPHSGPCPS) the composition is skewed to low complexity. S373 bears the Phosphoserine mark.

Belongs to the PROTOR family. As to quaternary structure, associated component of the mechanistic target of rapamycin complex 2 (mTORC2). Binds directly to MTOR and RICTOR within the TORC2 complex.

Its function is as follows. Associated subunit of mTORC2, which regulates cell growth and survival in response to hormonal signals. mTORC2 is activated by growth factors, but, in contrast to mTORC1, seems to be nutrient-insensitive. mTORC2 seems to function upstream of Rho GTPases to regulate the actin cytoskeleton, probably by activating one or more Rho-type guanine nucleotide exchange factors. PRR5 plays an important role in regulation of PDGFRB expression and in modulation of platelet-derived growth factor signaling. May act as a tumor suppressor in breast cancer. This is Proline-rich protein 5 from Rattus norvegicus (Rat).